The primary structure comprises 133 residues: Small ribosomal subunit protein uS9 (133 aa).

Over residues 97-113 (SKQELKSHGFLTRDPRK) the composition is skewed to basic and acidic residues. A disordered region spans residues 97–133 (SKQELKSHGFLTRDPRKKERKKYGHKKARKSFQFSKR). Residues 114–133 (KERKKYGHKKARKSFQFSKR) are compositionally biased toward basic residues.

Belongs to the universal ribosomal protein uS9 family.

The chain is Small ribosomal subunit protein uS9 from Chlamydia abortus (strain DSM 27085 / S26/3) (Chlamydophila abortus).